Consider the following 76-residue polypeptide: Sec-independent protein translocase protein TatA (76 aa).

Residues methionine 1–glycine 21 traverse the membrane as a helical segment. The interval methionine 43 to alanine 76 is disordered. Over residues glutamate 46 to alanine 76 the composition is skewed to basic and acidic residues.

The protein belongs to the TatA/E family. As to quaternary structure, the Tat system comprises two distinct complexes: a TatABC complex, containing multiple copies of TatA, TatB and TatC subunits, and a separate TatA complex, containing only TatA subunits. Substrates initially bind to the TatABC complex, which probably triggers association of the separate TatA complex to form the active translocon.

The protein resides in the cell inner membrane. In terms of biological role, part of the twin-arginine translocation (Tat) system that transports large folded proteins containing a characteristic twin-arginine motif in their signal peptide across membranes. TatA could form the protein-conducting channel of the Tat system. The sequence is that of Sec-independent protein translocase protein TatA from Shewanella loihica (strain ATCC BAA-1088 / PV-4).